The following is a 471-amino-acid chain: MDFQHRPGGKTGSGGVASSSESNRDRRERLRQLALETIDINKDPYFMKNHLGSYECKLCLTLHNNEGSYLAHTQGKKHQTNLARRAAKEAKEAPAQPAPEKVKVEVKKFVKIGRPGYKVTKQRDTEMGQQSLLFQIDYPEIAEGVMPRHRFMSAYEQRIEPPDRRWQYLLMAAEPYETIAFKVPSREIDKAEGKFWTHWNRETKQFFLQFHFKMEKPPAPPSLPAGPPGVKRPPPPLMNGLPPRPPLPDALPPPPPGGLPLPPMPPTGPAPSGPPGPPQMPPPAPGVHPPAPVVHPPTSGVHPPAPGVHPPAPVVHPPTSGVHPPAPGVHPPAPGVHPPAPGVHPPAPGVHPPAPGVHPPAPGVHPPAPGVHPPAPGVHPPPSAGVHPQAPGVHPPAPAVHPQAPGVHPPAPGIHPQAPGVHPQPPPGVHPAAPGVHPQPPGVHPTPMPPMLRPPLPSDGPGNMPPPPPGN.

M1 bears the N-acetylmethionine mark. Residues 1–27 form a disordered region; the sequence is MDFQHRPGGKTGSGGVASSSESNRDRR. K10 carries the post-translational modification N6-acetyllysine. Residues 54–84 form a Matrin-type zinc finger; that stretch reads YECKLCLTLHNNEGSYLAHTQGKKHQTNLAR. Phosphoserine is present on S153. 4 stretches are compositionally biased toward pro residues: residues 217-295, 303-316, 324-383, and 437-471; these read PPAP…PVVH, PPAP…PPPS, and HPQP…PPGN. The segment at 217-471 is disordered; the sequence is PPAPPSLPAG…GNMPPPPPGN (255 aa).

It belongs to the SF3A2 family. In terms of assembly, component of the 17S U2 SnRNP complex, a ribonucleoprotein complex that contains small nuclear RNA (snRNA) U2 and a number of specific proteins. Part of the SF3A subcomplex of the 17S U2 SnRNP complex which is composed of three subunits; SF3A3/SAP61, SF3A2/SAP62 and SF3A1/SAP114. SF3A associates with the splicing factor SF3B and a 12S RNA unit to form the mature 17S U2 small nuclear ribonucleoprotein complex (17S U2 snRNP). Identified in the spliceosome 'E' complex, a precursor of the spliceosome 'A' complex. Identified in the spliceosome 'A' and 'B' complexes. Identified in the spliceosome 'C' complex. Interacts with HTATSF1.

It is found in the nucleus. Component of the 17S U2 SnRNP complex of the spliceosome, a large ribonucleoprotein complex that removes introns from transcribed pre-mRNAs. The 17S U2 SnRNP complex (1) directly participates in early spliceosome assembly and (2) mediates recognition of the intron branch site during pre-mRNA splicing by promoting the selection of the pre-mRNA branch-site adenosine, the nucleophile for the first step of splicing. Within the 17S U2 SnRNP complex, SF3A2 is part of the SF3A subcomplex that contributes to the assembly of the 17S U2 snRNP, and the subsequent assembly of the pre-spliceosome 'E' complex and the pre-catalytic spliceosome 'A' complex. Involved in pre-mRNA splicing as a component of pre-catalytic spliceosome 'B' complexes, including the Bact complex. Interacts directly with the duplex formed by U2 snRNA and the intron. This chain is Splicing factor 3A subunit 2 (Sf3a2), found in Rattus norvegicus (Rat).